We begin with the raw amino-acid sequence, 90 residues long: Probable Fe(2+)-trafficking protein (90 aa).

It belongs to the Fe(2+)-trafficking protein family.

Its function is as follows. Could be a mediator in iron transactions between iron acquisition and iron-requiring processes, such as synthesis and/or repair of Fe-S clusters in biosynthetic enzymes. This is Probable Fe(2+)-trafficking protein from Aeromonas salmonicida (strain A449).